The chain runs to 214 residues: Small ribosomal subunit protein uS5 (214 aa).

The S5 DRBM domain maps to Leu-54–Val-117.

Belongs to the universal ribosomal protein uS5 family. As to quaternary structure, part of the 30S ribosomal subunit. Contacts protein S4.

Functionally, with S4 and S12 plays an important role in translational accuracy. The polypeptide is Small ribosomal subunit protein uS5 (Sulfurisphaera tokodaii (strain DSM 16993 / JCM 10545 / NBRC 100140 / 7) (Sulfolobus tokodaii)).